The sequence spans 432 residues: 3-phosphoshikimate 1-carboxyvinyltransferase (432 aa).

Positions 23, 24, and 28 each coordinate 3-phosphoshikimate. Lys23 is a phosphoenolpyruvate binding site. Residues Gly95 and Arg123 each coordinate phosphoenolpyruvate. Ser166, Gln168, Asp315, and Lys342 together coordinate 3-phosphoshikimate. A phosphoenolpyruvate-binding site is contributed by Gln168. Catalysis depends on Asp315, which acts as the Proton acceptor. Phosphoenolpyruvate is bound by residues Arg346 and Arg390.

It belongs to the EPSP synthase family. Monomer.

The protein localises to the cytoplasm. It catalyses the reaction 3-phosphoshikimate + phosphoenolpyruvate = 5-O-(1-carboxyvinyl)-3-phosphoshikimate + phosphate. The protein operates within metabolic intermediate biosynthesis; chorismate biosynthesis; chorismate from D-erythrose 4-phosphate and phosphoenolpyruvate: step 6/7. In terms of biological role, catalyzes the transfer of the enolpyruvyl moiety of phosphoenolpyruvate (PEP) to the 5-hydroxyl of shikimate-3-phosphate (S3P) to produce enolpyruvyl shikimate-3-phosphate and inorganic phosphate. This is 3-phosphoshikimate 1-carboxyvinyltransferase from Lactiplantibacillus plantarum (strain ATCC BAA-793 / NCIMB 8826 / WCFS1) (Lactobacillus plantarum).